Consider the following 602-residue polypeptide: Elongation factor 4 (602 aa).

One can recognise a tr-type G domain in the interval 7–189 (ARLRNFCIIA…SVVDRIPPPK (183 aa)). GTP-binding positions include 19 to 24 (DHGKST) and 136 to 139 (NKVD).

This sequence belongs to the TRAFAC class translation factor GTPase superfamily. Classic translation factor GTPase family. LepA subfamily.

The protein localises to the cell inner membrane. It carries out the reaction GTP + H2O = GDP + phosphate + H(+). Its function is as follows. Required for accurate and efficient protein synthesis under certain stress conditions. May act as a fidelity factor of the translation reaction, by catalyzing a one-codon backward translocation of tRNAs on improperly translocated ribosomes. Back-translocation proceeds from a post-translocation (POST) complex to a pre-translocation (PRE) complex, thus giving elongation factor G a second chance to translocate the tRNAs correctly. Binds to ribosomes in a GTP-dependent manner. The sequence is that of Elongation factor 4 from Prochlorococcus marinus (strain SARG / CCMP1375 / SS120).